The primary structure comprises 442 residues: Glycoprotein endo-alpha-1,2-mannosidase-like protein (442 aa).

Over 1-8 (MNRLRRKA) the chain is Cytoplasmic. The chain crosses the membrane as a helical; Signal-anchor for type II membrane protein span at residues 9–29 (CVALLLFTLFIFGTMMGLRTL). At 30–442 (KPTDGFSDLA…FSKEKEQWLM (413 aa)) the chain is on the lumenal side.

It belongs to the glycosyl hydrolase 99 family.

The protein localises to the golgi apparatus membrane. This chain is Glycoprotein endo-alpha-1,2-mannosidase-like protein (maneal), found in Danio rerio (Zebrafish).